Consider the following 2641-residue polypeptide: Inverse autotransporter adhesin YeeJ (2641 aa).

A signal peptide spans 1 to 26 (MGIKLRRLTAGICLVTQLAFPMAAAA). The LysM domain maps to 50-98 (VPYILGALESAQSVAERFGISVAELRKLNQFRTFARGFDNVRQGDELDV). Residues 99 to 118 (PAQVSEKKLTPPPGNSSDNL) form a disordered region. The tract at residues 125–400 (TSQQIGSLLA…SRYDLVDRNN (276 aa)) is inverse autotransporter. The invasin 3 domain stretch occupies residues 513–605 (QKDSSVSLST…GVDAAKAPAV (93 aa)). Big-1 domains lie at 617-711 (HSSI…AGFI), 721-815 (IATL…VSFV), 822-913 (QVDL…VNFI), 920-1017 (ALTL…MTFV), 1024-1116 (VVVL…VNIA), 1123-1220 (QVTL…VTFV), 1227-1319 (VVVL…VNIA), 1326-1423 (QVTL…VTFV), 1430-1523 (QVVL…VHFI), 1531-1633 (IIEL…SINV), 1641-1734 (HLTL…VTYV), 1741-1837 (EISL…VNFT), 1844-1941 (QVNL…VTLI), 1948-2032 (KLTS…PTEV), 2048-2139 (FTSL…LEAI), 2142-2236 (KLTL…VKVT), and 2244-2336 (VASF…ITLV). A C-type lectin domain region spans residues 2538-2641 (KSWWVNAGDA…FAHATCYKNL (104 aa)).

The protein belongs to the intimin/invasin family.

Its subcellular location is the cell outer membrane. A probable inverse autotransporter, it may be involved in biofilm formation and cell adhesion. May bind peptidoglycan via its LysM domain. Upon overexpression shows increased mature biofilm formation. This Escherichia coli O17:K52:H18 (strain UMN026 / ExPEC) protein is Inverse autotransporter adhesin YeeJ.